An 88-amino-acid chain; its full sequence is Putative membrane protein insertion efficiency factor (88 aa).

It belongs to the UPF0161 family.

Its subcellular location is the cell inner membrane. Functionally, could be involved in insertion of integral membrane proteins into the membrane. The polypeptide is Putative membrane protein insertion efficiency factor (Prochlorococcus marinus (strain MIT 9313)).